Here is a 367-residue protein sequence, read N- to C-terminus: Homoserine O-acetyltransferase (367 aa).

In terms of domain architecture, AB hydrolase-1 spans Asn41–Glu339. Ser136 acts as the Nucleophile in catalysis. Arg205 is a binding site for substrate. Catalysis depends on residues Asp303 and His333. Asp334 provides a ligand contact to substrate.

This sequence belongs to the AB hydrolase superfamily. MetX family. In terms of assembly, homodimer.

The protein resides in the cytoplasm. It carries out the reaction L-homoserine + acetyl-CoA = O-acetyl-L-homoserine + CoA. It participates in amino-acid biosynthesis; L-methionine biosynthesis via de novo pathway; O-acetyl-L-homoserine from L-homoserine: step 1/1. Functionally, transfers an acetyl group from acetyl-CoA to L-homoserine, forming acetyl-L-homoserine. In Corynebacterium diphtheriae (strain ATCC 700971 / NCTC 13129 / Biotype gravis), this protein is Homoserine O-acetyltransferase.